Reading from the N-terminus, the 334-residue chain is Glycerol-3-phosphate dehydrogenase [NAD(P)+] (334 aa).

Positions 14, 15, 35, and 109 each coordinate NADPH. Lys109, Gly138, and Thr140 together coordinate sn-glycerol 3-phosphate. Ala142 is a binding site for NADPH. The sn-glycerol 3-phosphate site is built by Lys194, Asp247, Ser257, Arg258, and Asn259. The active-site Proton acceptor is Lys194. Arg258 lines the NADPH pocket. The NADPH site is built by Val282 and Glu284.

This sequence belongs to the NAD-dependent glycerol-3-phosphate dehydrogenase family.

It localises to the cytoplasm. It catalyses the reaction sn-glycerol 3-phosphate + NAD(+) = dihydroxyacetone phosphate + NADH + H(+). The catalysed reaction is sn-glycerol 3-phosphate + NADP(+) = dihydroxyacetone phosphate + NADPH + H(+). The protein operates within membrane lipid metabolism; glycerophospholipid metabolism. Its function is as follows. Catalyzes the reduction of the glycolytic intermediate dihydroxyacetone phosphate (DHAP) to sn-glycerol 3-phosphate (G3P), the key precursor for phospholipid synthesis. The polypeptide is Glycerol-3-phosphate dehydrogenase [NAD(P)+] (Colwellia psychrerythraea (strain 34H / ATCC BAA-681) (Vibrio psychroerythus)).